A 125-amino-acid polypeptide reads, in one-letter code: Protein Turandot F (125 aa).

The N-terminal stretch at 1–19 is a signal peptide; it reads MKTVILFGFLLALLGYLEA.

It belongs to the Turandot family.

The protein localises to the secreted. A humoral factor that may play a role in stress tolerance. This is Protein Turandot F from Drosophila melanogaster (Fruit fly).